Reading from the N-terminus, the 126-residue chain is Small ribosomal subunit protein uS12 (126 aa).

The disordered stretch occupies residues methionine 1–glutamine 29. 3-methylthioaspartic acid is present on aspartate 89.

This sequence belongs to the universal ribosomal protein uS12 family. Part of the 30S ribosomal subunit. Contacts proteins S8 and S17. May interact with IF1 in the 30S initiation complex.

Functionally, with S4 and S5 plays an important role in translational accuracy. In terms of biological role, interacts with and stabilizes bases of the 16S rRNA that are involved in tRNA selection in the A site and with the mRNA backbone. Located at the interface of the 30S and 50S subunits, it traverses the body of the 30S subunit contacting proteins on the other side and probably holding the rRNA structure together. The combined cluster of proteins S8, S12 and S17 appears to hold together the shoulder and platform of the 30S subunit. This Protochlamydia amoebophila (strain UWE25) protein is Small ribosomal subunit protein uS12.